The following is a 488-amino-acid chain: Multidrug resistance outer membrane protein MdtP (488 aa).

An N-terminal signal peptide occupies residues 1 to 23 (MINRQLSRLLLCSILGSTTLISG). C24 carries N-palmitoyl cysteine lipidation. C24 is lipidated: S-diacylglycerol cysteine.

It belongs to the outer membrane factor (OMF) (TC 1.B.17) family. As to quaternary structure, could be part of a tripartite efflux system composed of MdtN, MdtO and MdtP.

It is found in the cell outer membrane. Functionally, could be involved in resistance to puromycin, acriflavine and tetraphenylarsonium chloride. The sequence is that of Multidrug resistance outer membrane protein MdtP (mdtP) from Shigella flexneri.